Consider the following 164-residue polypeptide: Large ribosomal subunit protein bL17 (164 aa).

The interval 127-164 (RARTDSVPARKGAGKKDASRVSGTVPDGQSQKIGKKKE) is disordered.

This sequence belongs to the bacterial ribosomal protein bL17 family. In terms of assembly, part of the 50S ribosomal subunit. Contacts protein L32.

The sequence is that of Large ribosomal subunit protein bL17 from Treponema pallidum (strain Nichols).